The following is a 224-amino-acid chain: Voltage-dependent calcium channel gamma-1 subunit (224 aa).

Residues 1–10 are Cytoplasmic-facing; sequence MSQTKALKVR. The helical transmembrane segment at 11-29 threads the bilayer; it reads VTLFCILVGIVLALVAVVT. Topologically, residues 30-110 are extracellular; that stretch reads DHWAVLSPHV…TQKEYSISAA (81 aa). 2 N-linked (GlcNAc...) asparagine glycosylation sites follow: Asn43 and Asn81. Cys57 and Cys82 are oxidised to a cystine. A helical membrane pass occupies residues 111 to 131; the sequence is AIAIFSLGFIILGTICGLLSF. The Cytoplasmic portion of the chain corresponds to 132-136; the sequence is RKKRD. Residues 137–157 form a helical membrane-spanning segment; that stretch reads YLLRPASMFYAFAGLCIFVSV. Over 158 to 181 the chain is Extracellular; that stretch reads EVMRQSVKRMIDSEDTVWIDYYYG. A helical membrane pass occupies residues 182-206; it reads WSFACACAAFILLFLGGIALLLFSL. The Cytoplasmic segment spans residues 207-224; the sequence is PRMPQYPWESCMDAEPEH.

It belongs to the PMP-22/EMP/MP20 family. CACNG subfamily. As to quaternary structure, component of a calcium channel complex consisting of a pore-forming alpha subunit (CACNA1S) and the ancillary subunits CACNB1 or CACNB2, CACNG1 and CACNA2D1. The channel complex contains alpha, beta, gamma and delta subunits in a 1:1:1:1 ratio, i.e. it contains either CACNB1 or CACNB2. Post-translationally, N-glycosylated.

It localises to the cell membrane. It is found in the sarcolemma. Functionally, regulatory subunit of the voltage-gated calcium channel that gives rise to L-type calcium currents in skeletal muscle. Regulates channel inactivation kinetics. The polypeptide is Voltage-dependent calcium channel gamma-1 subunit (CACNG1) (Sus scrofa (Pig)).